Consider the following 286-residue polypeptide: Probable biotin transporter (286 aa).

2 consecutive EamA domains span residues 3 to 128 (YLLF…AIIR) and 139 to 277 (GFLL…LWVN). 10 helical membrane-spanning segments follow: residues 4–24 (LLFV…YLAG), 26–46 (VDSY…FLPL), 56–76 (FVGG…VCLY), 81–101 (VLTV…VALF), 109–129 (FNFW…IIRY), 136–156 (FLQG…GQVL), 174–194 (FGYF…LFGD), 203–223 (LQWG…QFWW), 234–254 (TLAV…LLIW), and 258–280 (ADLP…NRLG).

Belongs to the drug/metabolite transporter (DMT) superfamily. 10 TMS drug/metabolite exporter (DME) (TC 2.A.7.3) family.

The protein localises to the cell inner membrane. It catalyses the reaction biotin(in) = biotin(out). Functionally, uptake of biotin. The polypeptide is Probable biotin transporter (Pseudomonas aeruginosa (strain ATCC 15692 / DSM 22644 / CIP 104116 / JCM 14847 / LMG 12228 / 1C / PRS 101 / PAO1)).